Reading from the N-terminus, the 93-residue chain is MPRSLKKGPFIDDHLLKKVDVQNEKNTKQVIKTWSRRSTIIPDFIGHTFAVHDGRKHVPVFVTESMVGHKLGEFAPTRTFKGHIKDDRKSKRR.

Belongs to the universal ribosomal protein uS19 family.

In terms of biological role, protein S19 forms a complex with S13 that binds strongly to the 16S ribosomal RNA. The polypeptide is Small ribosomal subunit protein uS19 (Mycobacteroides abscessus (strain ATCC 19977 / DSM 44196 / CCUG 20993 / CIP 104536 / JCM 13569 / NCTC 13031 / TMC 1543 / L948) (Mycobacterium abscessus)).